The primary structure comprises 315 residues: Homoserine kinase (315 aa).

P97–T107 contacts ATP.

The protein belongs to the GHMP kinase family. Homoserine kinase subfamily.

It localises to the cytoplasm. It carries out the reaction L-homoserine + ATP = O-phospho-L-homoserine + ADP + H(+). Its pathway is amino-acid biosynthesis; L-threonine biosynthesis; L-threonine from L-aspartate: step 4/5. Catalyzes the ATP-dependent phosphorylation of L-homoserine to L-homoserine phosphate. This is Homoserine kinase from Synechococcus sp. (strain CC9311).